The following is a 149-amino-acid chain: Glutamyl-tRNA(Gln) amidotransferase subunit C, mitochondrial (149 aa).

A mitochondrion-targeting transit peptide spans 1 to 25 (MNHLHRLFRITQVDRPVLLAITRRL).

The protein belongs to the GatC family. Subunit of the heterotrimeric GatCAB amidotransferase (AdT) complex, composed of A, B and C subunits.

It is found in the mitochondrion. It catalyses the reaction L-glutamyl-tRNA(Gln) + L-glutamine + ATP + H2O = L-glutaminyl-tRNA(Gln) + L-glutamate + ADP + phosphate + H(+). In terms of biological role, allows the formation of correctly charged Gln-tRNA(Gln) through the transamidation of misacylated Glu-tRNA(Gln) in the mitochondria. The reaction takes place in the presence of glutamine and ATP through an activated gamma-phospho-Glu-tRNA(Gln). The protein is Glutamyl-tRNA(Gln) amidotransferase subunit C, mitochondrial of Branchiostoma floridae (Florida lancelet).